We begin with the raw amino-acid sequence, 495 residues long: ATP synthase subunit beta, chloroplastic (495 aa).

172–179 (GGAGVGKT) contributes to the ATP binding site.

The protein belongs to the ATPase alpha/beta chains family. In terms of assembly, F-type ATPases have 2 components, CF(1) - the catalytic core - and CF(0) - the membrane proton channel. CF(1) has five subunits: alpha(3), beta(3), gamma(1), delta(1), epsilon(1). CF(0) has four main subunits: a(1), b(1), b'(1) and c(9-12).

The protein localises to the plastid. Its subcellular location is the chloroplast thylakoid membrane. It catalyses the reaction ATP + H2O + 4 H(+)(in) = ADP + phosphate + 5 H(+)(out). In terms of biological role, produces ATP from ADP in the presence of a proton gradient across the membrane. The catalytic sites are hosted primarily by the beta subunits. In Brimeura amethystina (Spanish hyacinth), this protein is ATP synthase subunit beta, chloroplastic.